We begin with the raw amino-acid sequence, 72 residues long: uncharacterized protein (72 aa).

The interval 15-62 is disordered; that stretch reads NNNYNNNNNNNNNNNNNNNNNNNNNNNNNNININNNNNNNNNNNNNNN.

This is an uncharacterized protein from Dictyostelium discoideum (Social amoeba).